The sequence spans 425 residues: Type I restriction enzyme MjaVIII specificity subunit (425 aa).

The protein belongs to the type-I restriction system S methylase family. As to quaternary structure, the type I restriction/modification system is composed of three polypeptides R, M and S.

Functionally, the specificity (S) subunit of a type I restriction enzyme; this subunit dictates DNA sequence specificity. The M and S subunits together form a methyltransferase (MTase) that methylates A-2 on the top and A-3 on the bottom strand of the sequence 5'-GAYN(5)GTAA-3'. In the presence of the R subunit the complex can also act as an endonuclease, binding to the same target sequence but cutting the DNA some distance from this site. Whether the DNA is cut or modified depends on the methylation state of the target sequence. When the target site is unmodified, the DNA is cut. When the target site is hemimethylated, the complex acts as a maintenance MTase modifying the DNA so that both strands become methylated. After locating a non-methylated recognition site, the enzyme complex serves as a molecular motor that translocates DNA in an ATP-dependent manner until a collision occurs that triggers cleavage. This chain is Type I restriction enzyme MjaVIII specificity subunit, found in Methanocaldococcus jannaschii (strain ATCC 43067 / DSM 2661 / JAL-1 / JCM 10045 / NBRC 100440) (Methanococcus jannaschii).